Reading from the N-terminus, the 38-residue chain is Large ribosomal subunit protein bL12 (38 aa).

This sequence belongs to the bacterial ribosomal protein bL12 family. Homodimer. Part of the ribosomal stalk of the 50S ribosomal subunit. Forms a multimeric L10(L12)X complex, where L10 forms an elongated spine to which 2 to 4 L12 dimers bind in a sequential fashion. Binds GTP-bound translation factors.

Its function is as follows. Forms part of the ribosomal stalk which helps the ribosome interact with GTP-bound translation factors. Is thus essential for accurate translation. This Salinivibrio costicola (Vibrio costicola) protein is Large ribosomal subunit protein bL12 (rplL).